The sequence spans 566 residues: Solute carrier family 2, facilitated glucose transporter member 9 (566 aa).

Residues 1–31 (MARKQNRNSKELGLAPLADDTSHAGPPGPGR) are disordered. Residues 1 to 51 (MARKQNRNSKELGLAPLADDTSHAGPPGPGRALLECDHLRSGLPDGRRRKD) lie on the Cytoplasmic side of the membrane. A Phosphoserine modification is found at serine 9. A helical membrane pass occupies residues 52–72 (WSCSLLVASLAGAFGSSFLYG). At 73-107 (YNLSVVNAPTPYIKAFYNESWERRHGRPIDPDTLT) the chain is on the extracellular side. 2 N-linked (GlcNAc...) asparagine glycosylation sites follow: asparagine 74 and asparagine 90. Residues 108–128 (LLWSVTVSIFAIGGLVGTLMV) form a helical membrane-spanning segment. Residues 129–140 (KMIGKVLGRKHT) are Cytoplasmic-facing. A helical transmembrane segment spans residues 141 to 161 (LLANNGFAISAALLMACSLQA). At 162–171 (GAFEMLIVGR) the chain is on the extracellular side. A helical membrane pass occupies residues 172 to 192 (FIMGIDGGIALSVLPMYLSEI). Over 193–200 (SPKEIRGS) the chain is Cytoplasmic. The helical transmembrane segment at 201–221 (LGQVTAIFICIGVFTGQLLGL) threads the bilayer. The Extracellular portion of the chain corresponds to 222 to 231 (PELLGKESTW). The chain crosses the membrane as a helical span at residues 232–252 (PYLFGVIVVPAVVQLLSLPFL). Residues 253–316 (PDSPRYLLLE…LRAPYVRWQV (64 aa)) are Cytoplasmic-facing. Residues 317–337 (VTVIVTMACYQLCGLNAIWFY) traverse the membrane as a helical segment. Over 338-354 (TNSIFGKAGIPPAKIPY) the chain is Extracellular. Residues 355–375 (VTLSTGGIETLAAIFSGLVIE) form a helical membrane-spanning segment. The Cytoplasmic segment spans residues 376 to 381 (HLGRRP). Residues 382–402 (LLIGGFGLMALFFGTLTVTLT) traverse the membrane as a helical segment. Over 403–415 (LQDRAPWVPYLSI) the chain is Extracellular. The helical transmembrane segment at 416–436 (VGILAIIASFCSGPGGIPFIL) threads the bilayer. Topologically, residues 437-451 (TGEFFQQSQRPAAFI) are cytoplasmic. The chain crosses the membrane as a helical span at residues 452 to 472 (IAGTVNWLSNFAVGLLFPFIQ). Residues 473-478 (KSLDTY) are Extracellular-facing. A helical membrane pass occupies residues 479–499 (CFLVFATICMTGAIYLYFVLP). At 500–566 (ETKNRTYAEI…YMDDLTFQET (67 aa)) the chain is on the cytoplasmic side. The residue at position 514 (serine 514) is a Phosphoserine. Positions 524 to 539 (EKIDSAVTDGKTKGRP) are enriched in basic and acidic residues. Residues 524–543 (EKIDSAVTDGKTKGRPEQVS) form a disordered region.

The protein belongs to the major facilitator superfamily. Sugar transporter (TC 2.A.1.1) family.

The protein localises to the basolateral cell membrane. Its subcellular location is the apical cell membrane. The enzyme catalyses urate(out) = urate(in). In terms of biological role, high-capacity urate transporter, which may play a role in the urate reabsorption by proximal tubules. May have a residual high-affinity, low-capacity glucose and fructose transporter activity. Transports urate at rates 45- to 60-fold faster than glucose. Does not transport galactose. May mediate small uptake of adenine but not of other nucleobases. The protein is Solute carrier family 2, facilitated glucose transporter member 9 of Pongo abelii (Sumatran orangutan).